Reading from the N-terminus, the 301-residue chain is Polyamine aminopropyltransferase (301 aa).

In terms of domain architecture, PABS spans 4 to 240 (WHWLLEWQTP…GLWGFVYGGV (237 aa)). Glutamine 33 is an S-methyl-5'-thioadenosine binding site. Residues histidine 64 and glutamate 89 each coordinate spermidine. S-methyl-5'-thioadenosine is bound by residues aspartate 109 and 141–142 (DG). Aspartate 159 acts as the Proton acceptor in catalysis.

It belongs to the spermidine/spermine synthase family. As to quaternary structure, homotrimer.

Its subcellular location is the cytoplasm. The catalysed reaction is S-adenosyl 3-(methylsulfanyl)propylamine + putrescine = S-methyl-5'-thioadenosine + spermidine + H(+). It catalyses the reaction S-adenosyl 3-(methylsulfanyl)propylamine + propane-1,3-diamine = norspermidine + S-methyl-5'-thioadenosine + H(+). It carries out the reaction norspermidine + S-adenosyl 3-(methylsulfanyl)propylamine = norspermine + S-methyl-5'-thioadenosine + H(+). The enzyme catalyses S-adenosyl 3-(methylsulfanyl)propylamine + spermidine = thermospermine + S-methyl-5'-thioadenosine + H(+). Its pathway is amine and polyamine biosynthesis; spermidine biosynthesis; spermidine from putrescine: step 1/1. Competitively inhibited by 5-methylthioadenosine, 5-methylthiotubercidin, S-adenosyl(5)-3-thiopropylamine and S-adenosyl-3-thio-l,8-diaminooctane. In terms of biological role, involved in the biosynthesis of polyamines which are thought to support the growth of thermophilic microorganisms under high-temperature conditions. It seems that long-chain and branched-chain of polyamines effectively stabilize DNA and RNA, respectively. Catalyzes the irreversible transfer of a propylamine group from the amino donor S-adenosylmethioninamine (decarboxy-AdoMet) to various amine acceptors such as putrescine (1,4-diaminobutane), 1,3-diaminopropane, sym-norspermidine and spermidine. The biosynthesis of caldopentamine from norspermine has been also observed, but with a very low activity. The reaction involves a nucleophilic attack on the C-3 methylene of the propylamine moiety adjacent to the positively charged sulfur of decarboxy-AdoMet. S-adenosylmethioninamine is the only amino donor. The chain is Polyamine aminopropyltransferase from Saccharolobus solfataricus (strain ATCC 35092 / DSM 1617 / JCM 11322 / P2) (Sulfolobus solfataricus).